Here is a 303-residue protein sequence, read N- to C-terminus: Ubiquinone biosynthesis protein COQ4, mitochondrial (303 aa).

Residues His191, Asp192, His195, and Glu207 each contribute to the Zn(2+) site.

Belongs to the COQ4 family. As to quaternary structure, component of a multi-subunit COQ enzyme complex, composed of at least COQ3, COQ4, COQ5, COQ6, COQ7 and COQ9. Zn(2+) serves as cofactor.

It localises to the mitochondrion inner membrane. It catalyses the reaction a 4-hydroxy-3-methoxy-5-(all-trans-polyprenyl)benzoate + H(+) = a 2-methoxy-6-(all-trans-polyprenyl)phenol + CO2. It functions in the pathway cofactor biosynthesis; ubiquinone biosynthesis. In terms of biological role, lyase that catalyzes the C1-decarboxylation of 4-hydroxy-3-methoxy-5-(all-trans-polyprenyl)benzoic acid into 2-methoxy-6-(all-trans-polyprenyl)phenol during ubiquinone biosynthesis. This chain is Ubiquinone biosynthesis protein COQ4, mitochondrial, found in Komagataella phaffii (strain GS115 / ATCC 20864) (Yeast).